Consider the following 544-residue polypeptide: Membrane protein insertase YidC (544 aa).

The chain crosses the membrane as a helical span at residues 6–26 (NLLLIALLFVTFMLWQAWETD). Positions 112-132 (SGLTGKNGPDNPANGPRPLFT) are disordered. 4 helical membrane passes run 343 to 363 (KFLHGFIGNWGFSIIAITFIV), 418 to 438 (LGGCFPLLIQMPIFLALYYML), 456 to 476 (LSAQDPYYILPILMGVTMFFI), and 497 to 517 (PVIFTVFFLWFPSGLVMYYIV).

Belongs to the OXA1/ALB3/YidC family. Type 1 subfamily. Interacts with the Sec translocase complex via SecD. Specifically interacts with transmembrane segments of nascent integral membrane proteins during membrane integration.

Its subcellular location is the cell inner membrane. Required for the insertion and/or proper folding and/or complex formation of integral membrane proteins into the membrane. Involved in integration of membrane proteins that insert both dependently and independently of the Sec translocase complex, as well as at least some lipoproteins. Aids folding of multispanning membrane proteins. The chain is Membrane protein insertase YidC from Pectobacterium carotovorum subsp. carotovorum (strain PC1).